The sequence spans 834 residues: DNA-directed RNA polymerase subunit beta' (834 aa).

Positions 1-22 (MTYSNKPTGSSLRSSRNSTLEP) are enriched in polar residues. The disordered stretch occupies residues 1–45 (MTYSNKPTGSSLRSSRNSTLEPQSLVHREESKRQEGPKGQNLRIG). Over residues 26-36 (VHREESKRQEG) the composition is skewed to basic and acidic residues. Zn(2+) is bound by residues Cys101, Cys103, Cys118, and Cys121. Mg(2+) contacts are provided by Asp606, Asp608, and Asp610.

Belongs to the RNA polymerase beta' chain family. RpoC1 subfamily. In plastids the minimal PEP RNA polymerase catalytic core is composed of four subunits: alpha, beta, beta', and beta''. When a (nuclear-encoded) sigma factor is associated with the core the holoenzyme is formed, which can initiate transcription. It depends on Mg(2+) as a cofactor. Requires Zn(2+) as cofactor.

It is found in the plastid. The protein resides in the chloroplast. The enzyme catalyses RNA(n) + a ribonucleoside 5'-triphosphate = RNA(n+1) + diphosphate. Functionally, DNA-dependent RNA polymerase catalyzes the transcription of DNA into RNA using the four ribonucleoside triphosphates as substrates. In Staurastrum punctulatum (Green alga), this protein is DNA-directed RNA polymerase subunit beta'.